We begin with the raw amino-acid sequence, 308 residues long: MRFKGLDLNLLVALDALMTERNLTAAARSINLSQPAMSAAVGRLRVYFEDELFTMNGRELVLTPRAKGLVSAVREALLHIQLSIISWEPFDPFQSDRRFRIILSDFLTLVFMEKVVKRRAREAPGVSFEFLPLADDYDELLRRGEVDFIILPDVFMPTGHPRAKLFEERLVCVGCGRNQELSQPLTFDRYMSMGHVAAKFGNSRRPSIEEWYLLEHGFKRRIEVVVQGFSMILPVLSNTNRIATVPLRLAQHFAEVLPLRIMDLPLPLPPFTEAVQWPALQNSDPASLWMRGILLQEASRLALPSAEH.

The 58-residue stretch at 6–63 (LDLNLLVALDALMTERNLTAAARSINLSQPAMSAAVGRLRVYFEDELFTMNGRELVLT) folds into the HTH lysR-type domain. Residues 23–42 (LTAAARSINLSQPAMSAAVG) constitute a DNA-binding region (H-T-H motif).

It belongs to the LysR transcriptional regulatory family.

Functionally, nodD regulates the expression of the nodABCFE genes which encode other nodulation proteins. NodD is also a negative regulator of its own expression. Binds flavonoids as inducers. This is Nodulation protein D 1 (nodD1) from Rhizobium tropici.